The primary structure comprises 672 residues: Acetoacetyl-CoA synthetase (672 aa).

Belongs to the ATP-dependent AMP-binding enzyme family.

The protein localises to the cytoplasm. It localises to the cytosol. The enzyme catalyses acetoacetate + ATP + CoA = acetoacetyl-CoA + AMP + diphosphate. Functionally, converts acetoacetate to acetoacetyl-CoA in the cytosol. Ketone body-utilizing enzyme, responsible for the synthesis of cholesterol and fatty acids. The chain is Acetoacetyl-CoA synthetase (Aacs) from Mus musculus (Mouse).